A 570-amino-acid polypeptide reads, in one-letter code: Periplasmic trehalase (570 aa).

Residues 1–34 (MIPPEIRRSVLLQKAIKLALAGTLLTFASFSATA) form the signal peptide. Substrate contacts are provided by residues Arg-159, 166–167 (WD), Asn-203, 212–214 (RSQ), 284–286 (RPE), and Gly-317. Residues Asp-319 and Glu-503 each act as proton donor/acceptor in the active site. Glu-518 provides a ligand contact to substrate. The interval 544–570 (KPCDSVPSTRPASLSATPTKTPSAATQ) is disordered. A compositionally biased stretch (low complexity) spans 554-570 (PASLSATPTKTPSAATQ).

It belongs to the glycosyl hydrolase 37 family. In terms of assembly, monomer.

It is found in the periplasm. It catalyses the reaction alpha,alpha-trehalose + H2O = alpha-D-glucose + beta-D-glucose. Its function is as follows. Provides the cells with the ability to utilize trehalose at high osmolarity by splitting it into glucose molecules that can subsequently be taken up by the phosphotransferase-mediated uptake system. The polypeptide is Periplasmic trehalase (Salmonella typhimurium (strain LT2 / SGSC1412 / ATCC 700720)).